Reading from the N-terminus, the 200-residue chain is Imidazole glycerol phosphate synthase subunit HisH (200 aa).

The region spanning 3-200 is the Glutamine amidotransferase type-1 domain; the sequence is DVALIDAGGA…LHNFLEMSFP (198 aa). The active-site Nucleophile is the Cys-78. Residues His-179 and Glu-181 contribute to the active site.

Heterodimer of HisH and HisF.

The protein resides in the cytoplasm. The enzyme catalyses 5-[(5-phospho-1-deoxy-D-ribulos-1-ylimino)methylamino]-1-(5-phospho-beta-D-ribosyl)imidazole-4-carboxamide + L-glutamine = D-erythro-1-(imidazol-4-yl)glycerol 3-phosphate + 5-amino-1-(5-phospho-beta-D-ribosyl)imidazole-4-carboxamide + L-glutamate + H(+). It carries out the reaction L-glutamine + H2O = L-glutamate + NH4(+). The protein operates within amino-acid biosynthesis; L-histidine biosynthesis; L-histidine from 5-phospho-alpha-D-ribose 1-diphosphate: step 5/9. IGPS catalyzes the conversion of PRFAR and glutamine to IGP, AICAR and glutamate. The HisH subunit catalyzes the hydrolysis of glutamine to glutamate and ammonia as part of the synthesis of IGP and AICAR. The resulting ammonia molecule is channeled to the active site of HisF. This chain is Imidazole glycerol phosphate synthase subunit HisH, found in Xanthomonas oryzae pv. oryzae (strain MAFF 311018).